We begin with the raw amino-acid sequence, 76 residues long: Monocarboxylate transporter 1 (76 aa).

The next 3 membrane-spanning stretches (helical) occupy residues 1–18 (LSIL…MGLA), 28–48 (IQYF…LAPL), and 53–73 (IGFC…SSVL). Aspartate 8 is a binding site for H(+). Arginine 12 lines the (S)-lactate pocket.

This sequence belongs to the major facilitator superfamily. Monocarboxylate porter (TC 2.A.1.13) family. As to quaternary structure, interacts with BSG; interaction mediates SLC16A1 targeting to the plasma membrane. Interacts with EMB; interaction mediates SLC16A1 targeting to the plasma membrane.

The protein localises to the cell membrane. It is found in the basolateral cell membrane. Its subcellular location is the apical cell membrane. The catalysed reaction is (S)-lactate(in) + H(+)(in) = (S)-lactate(out) + H(+)(out). The enzyme catalyses acetate(out) + H(+)(out) = acetate(in) + H(+)(in). It carries out the reaction acetoacetate(out) + H(+)(out) = acetoacetate(in) + H(+)(in). It catalyses the reaction pyruvate(out) + H(+)(out) = pyruvate(in) + H(+)(in). The catalysed reaction is (R)-3-hydroxybutanoate(out) + H(+)(out) = (R)-3-hydroxybutanoate(in) + H(+)(in). The enzyme catalyses 3-methyl-2-oxobutanoate(out) + H(+)(out) = 3-methyl-2-oxobutanoate(in) + H(+)(in). It carries out the reaction 4-methyl-2-oxopentanoate(out) + H(+)(out) = 4-methyl-2-oxopentanoate(in) + H(+)(in). It catalyses the reaction succinate(in) + 2 H(+)(in) = succinate(out) + 2 H(+)(out). Bidirectional proton-coupled monocarboxylate transporter. Catalyzes the rapid transport across the plasma membrane of many monocarboxylates such as lactate, pyruvate, acetate and the ketone bodies acetoacetate and beta-hydroxybutyrate, and thus contributes to the maintenance of intracellular pH. The transport direction is determined by the proton motive force and the concentration gradient of the substrate monocarboxylate. MCT1 is a major lactate exporter. Plays a role in cellular responses to a high-fat diet by modulating the cellular levels of lactate and pyruvate that contribute to the regulation of central metabolic pathways and insulin secretion, with concomitant effects on plasma insulin levels and blood glucose homeostasis. Facilitates the protonated monocarboxylate form of succinate export, that its transient protonation upon muscle cell acidification in exercising muscle and ischemic heart. Functions via alternate outward- and inward-open conformation states. Protonation and deprotonation is essential for the conformational transition. The polypeptide is Monocarboxylate transporter 1 (SLC16A1) (Meriones unguiculatus (Mongolian jird)).